Reading from the N-terminus, the 126-residue chain is Large ribosomal subunit protein uL22c (126 aa).

This sequence belongs to the universal ribosomal protein uL22 family. Part of the 50S ribosomal subunit.

It localises to the plastid. Its subcellular location is the chloroplast. In terms of biological role, this protein binds specifically to 23S rRNA. The globular domain of the protein is located near the polypeptide exit tunnel on the outside of the subunit, while an extended beta-hairpin is found that lines the wall of the exit tunnel in the center of the 70S ribosome. In Cryptomeria japonica (Japanese cedar), this protein is Large ribosomal subunit protein uL22c (rpl22).